We begin with the raw amino-acid sequence, 658 residues long: Pentatricopeptide repeat-containing protein At1g69290 (658 aa).

2 disordered regions span residues 1–23 and 39–61; these read MFRKTLNSISRRHFSSSSPESPS and TLSPSLSPPQNPKTLTPDQKSSF. A compositionally biased stretch (polar residues) spans 50-61; the sequence is PKTLTPDQKSSF. PPR repeat units lie at residues 214 to 249, 250 to 284, 285 to 320, 323 to 353, 361 to 395, 397 to 431, 432 to 466, 467 to 497, 503 to 537, 538 to 568, and 581 to 615; these read DLVASNAALEACCRQMESLADAENVIESMAVLGVKP, DELSFGFLAYLYARKGLREKISELENLMDGFGFAS, RRILYSNMISGYVKSGDLDSVSDVILHSLKEGGEES, SVETYCELVKGFIESKSVKSLAKVILEAQKL, DSSVGFGIINACVNLGFSDKAHSILEEMIAQGGGS, GIGVYVPILKAYCKEYRTAEATQLVTEISSSGLQL, DVEISNALIEASMTNQDFISAFTLFRDMRENRVVD, LKGSYLTIMTGLLENQRPELMAAFLDEVVED, NSHDWNSIIHAFCKSGRLEDARRTFRRMVFLRYEP, NNQTYLSLINGYVSGEKYFNVLLLWNEIKGK, and DHALVDAFLYALVKGGFFDAAMQVVEKSQEMKIFV.

Belongs to the PPR family. P subfamily.

The protein is Pentatricopeptide repeat-containing protein At1g69290 of Arabidopsis thaliana (Mouse-ear cress).